A 214-amino-acid polypeptide reads, in one-letter code: Transcriptional regulatory protein MctR (214 aa).

One can recognise a Response regulatory domain in the interval Arg-8–Ala-124. Residue Asp-59 is modified to 4-aspartylphosphate. Positions Val-143–Gly-208 constitute an HTH luxR-type domain. The H-T-H motif DNA-binding region spans Asn-167–Lys-186.

The protein resides in the cytoplasm. Member of the two-component regulatory system MctS/MctR, which activates mctP expression. This is Transcriptional regulatory protein MctR from Rhizobium johnstonii (strain DSM 114642 / LMG 32736 / 3841) (Rhizobium leguminosarum bv. viciae).